The following is a 512-amino-acid chain: ADP,ATP carrier protein 4 (512 aa).

12 helical membrane-spanning segments follow: residues 34 to 54 (ISKFLFITLLMFCILFIQNLI), 71 to 91 (ISFLKFWGVMPSAFLITVMYV), 102 to 122 (IFYLIISIFLIFFALFAYVIF), 157 to 177 (FSLFYIIAELWPNVVFALLFW), 192 to 212 (FYPLFGLLSQTGIYLAGHFLE), 231 to 251 (FHTLSIQIILTIVLILGIVSI), 296 to 316 (LIATLLICYGIAINLVEGPWK), 330 to 350 (AAFIGSYLSYTGVFTIFFVLL), 361 to 381 (FTSAVITPSIVFITGILFFAF), 390 to 410 (LIIANFILTDPALVAITIGAI), 448 to 468 (VIGTKLGKSGSAFLQSLIFII), and 476 to 496 (SISICLMIIFILTCLTWIWAT).

The protein belongs to the ADP/ATP translocase tlc family.

The protein resides in the cell membrane. Provides the rickettsial cell with host ATP in exchange for rickettsial ADP. This is an obligate exchange system. This energy acquiring activity is an important component of rickettsial parasitism. This is ADP,ATP carrier protein 4 (tlcD) from Rickettsia typhi (strain ATCC VR-144 / Wilmington).